The following is a 620-amino-acid chain: Chaperone protein HtpG (620 aa).

Residues methionine 1–arginine 334 form an a; substrate-binding region. Positions glutamate 335 to arginine 548 are b. Residues methionine 549–leucine 620 form a c region.

It belongs to the heat shock protein 90 family. Homodimer.

The protein localises to the cytoplasm. Functionally, molecular chaperone. Has ATPase activity. This is Chaperone protein HtpG from Rhodopseudomonas palustris (strain BisA53).